Reading from the N-terminus, the 516-residue chain is MAYVLTETAAGYALLKAADKKIHKSSSLVEDLNTAEKVAEQFKIHRFEKFQSAANALEEANAIIEGKVSENLQKLLEDAKSDKKATLIVSEAKLGNAINKLGLNFQVVSDAASLDLQRAIKQFLPELLPGLDDSALKQMSLGLAHSMGRHKLKFSADKVDTMIIQAIALLDDLDKELNTYAMRCKEWYGWHFPELAKMITDSAAYARIILTMGVRSNASETDLSEILPEEVEEQVKAAAEVSMGTEITEDDLNNIKALAEQIVDFAAYREQLSNYLSSRMKAIAPNLTAMVGELVGARLIAHAGSLTSLAKAPASTVQILGAEKALFRALKTKHDTPKYGIIYHASLVGQASGKNKGRIARTLAAKAAVSLRYDCFDEERDESDDFGLENRAKVEGRLSQLEGRDMRTTSKVVREQPKVEITEARAYNADADSTAAAAAAAPTADSDDEESETEEVEEKKSKKDKKKDKKEKKDKKKDKKRKRDDDKEDKESSKKSKKDKKEKKEKKEKKAKKEKK.

A Nop domain is found at 283–403 (IAPNLTAMVG…VEGRLSQLEG (121 aa)). Residues 423–516 (EARAYNADAD…KEKKAKKEKK (94 aa)) are disordered. Residues 429-444 (ADADSTAAAAAAAPTA) are compositionally biased toward low complexity. Acidic residues predominate over residues 445-456 (DSDDEESETEEV). Basic residues predominate over residues 462-482 (KKDKKKDKKEKKDKKKDKKRK). The segment covering 483–494 (RDDDKEDKESSK) has biased composition (basic and acidic residues). Residues 495-516 (KSKKDKKEKKEKKEKKAKKEKK) show a composition bias toward basic residues.

This sequence belongs to the NOP5/NOP56 family.

It localises to the nucleus. Its subcellular location is the nucleolus. Functionally, required for pre-18S rRNA processing. May bind microtubules. The protein is Nucleolar protein 58 (NOP58) of Candida albicans (strain SC5314 / ATCC MYA-2876) (Yeast).